The primary structure comprises 241 residues: Putative integrase ORF241 (241 aa).

The Tyr recombinase domain occupies 82-241; that stretch reads VEAKKTLVSA…AIEMLRKLAD (160 aa). Catalysis depends on residues Arg119, Lys144, His191, Arg194, and His217. The O-(3'-phospho-DNA)-tyrosine intermediate role is filled by Tyr226.

This sequence belongs to the 'phage' integrase family.

In terms of biological role, this protein may encode an integrase, which is necessary for integration of the viral DNA into host genome. The chain is Putative integrase ORF241 from Acidianus convivator (ATV).